A 508-amino-acid polypeptide reads, in one-letter code: UDP-N-acetylmuramoylalanine--D-glutamate ligase (508 aa).

Residue 138 to 144 (GTNGKTT) coordinates ATP. Residues 294–314 (FDEPAPRRKKDAPPPTRAGGR) are disordered.

The protein belongs to the MurCDEF family.

Its subcellular location is the cytoplasm. The catalysed reaction is UDP-N-acetyl-alpha-D-muramoyl-L-alanine + D-glutamate + ATP = UDP-N-acetyl-alpha-D-muramoyl-L-alanyl-D-glutamate + ADP + phosphate + H(+). The protein operates within cell wall biogenesis; peptidoglycan biosynthesis. Its function is as follows. Cell wall formation. Catalyzes the addition of glutamate to the nucleotide precursor UDP-N-acetylmuramoyl-L-alanine (UMA). In Bordetella parapertussis (strain 12822 / ATCC BAA-587 / NCTC 13253), this protein is UDP-N-acetylmuramoylalanine--D-glutamate ligase.